Reading from the N-terminus, the 246-residue chain is MLLIPAIDLKDGHCVRLKQGDMDQSTTFSEEPFVMARNWVDKGARRLHLVDLNGAFAGHPKNELAIRKILKDVGSEVDVQLGGGIRDLDTIERYLDAGLRYVIIGTAAVKNPGFLQDACTAFGGHIIVGLDARDGKIATDGWSKLTRHDVVDLAKKFEDYGVESIIYTDISRDGMLSGINIEATVRLAQALTIPVIASGGLSGMADIEALCAVENEGIEGVICGRAIYSGDLDFEAAQERANELNG.

The active-site Proton acceptor is the aspartate 8. Aspartate 131 acts as the Proton donor in catalysis.

The protein belongs to the HisA/HisF family.

The protein resides in the cytoplasm. The enzyme catalyses 1-(5-phospho-beta-D-ribosyl)-5-[(5-phospho-beta-D-ribosylamino)methylideneamino]imidazole-4-carboxamide = 5-[(5-phospho-1-deoxy-D-ribulos-1-ylimino)methylamino]-1-(5-phospho-beta-D-ribosyl)imidazole-4-carboxamide. The protein operates within amino-acid biosynthesis; L-histidine biosynthesis; L-histidine from 5-phospho-alpha-D-ribose 1-diphosphate: step 4/9. The polypeptide is 1-(5-phosphoribosyl)-5-[(5-phosphoribosylamino)methylideneamino] imidazole-4-carboxamide isomerase (Albidiferax ferrireducens (strain ATCC BAA-621 / DSM 15236 / T118) (Rhodoferax ferrireducens)).